A 37-amino-acid chain; its full sequence is Large ribosomal subunit protein bL36 (37 aa).

The protein belongs to the bacterial ribosomal protein bL36 family.

The polypeptide is Large ribosomal subunit protein bL36 (Alkaliphilus metalliredigens (strain QYMF)).